The primary structure comprises 452 residues: Putative zinc metalloprotease VC_2253 (452 aa).

Residue His-22 participates in Zn(2+) binding. Glu-23 is an active-site residue. His-26 contacts Zn(2+). The helical transmembrane segment at 98-120 threads the bilayer; that stretch reads SAIVSAGPIFNFLFAIFAYWLVF. The PDZ domain maps to 197-292; it reads NLRDWNFDPE…QVELTLIPDS (96 aa). Transmembrane regions (helical) follow at residues 378–400 and 428–447; these read FVYF…LVPL and MGYR…AIFN.

Belongs to the peptidase M50B family. It depends on Zn(2+) as a cofactor.

The protein localises to the cell inner membrane. This chain is Putative zinc metalloprotease VC_2253, found in Vibrio cholerae serotype O1 (strain ATCC 39315 / El Tor Inaba N16961).